The chain runs to 257 residues: Imidazole glycerol phosphate synthase subunit HisF (257 aa).

Residues Asp-11 and Asp-130 contribute to the active site.

This sequence belongs to the HisA/HisF family. As to quaternary structure, heterodimer of HisH and HisF.

It is found in the cytoplasm. The enzyme catalyses 5-[(5-phospho-1-deoxy-D-ribulos-1-ylimino)methylamino]-1-(5-phospho-beta-D-ribosyl)imidazole-4-carboxamide + L-glutamine = D-erythro-1-(imidazol-4-yl)glycerol 3-phosphate + 5-amino-1-(5-phospho-beta-D-ribosyl)imidazole-4-carboxamide + L-glutamate + H(+). The protein operates within amino-acid biosynthesis; L-histidine biosynthesis; L-histidine from 5-phospho-alpha-D-ribose 1-diphosphate: step 5/9. IGPS catalyzes the conversion of PRFAR and glutamine to IGP, AICAR and glutamate. The HisF subunit catalyzes the cyclization activity that produces IGP and AICAR from PRFAR using the ammonia provided by the HisH subunit. This chain is Imidazole glycerol phosphate synthase subunit HisF, found in Shewanella sp. (strain ANA-3).